Reading from the N-terminus, the 393-residue chain is Carbamoyl phosphate synthase small chain (393 aa).

Positions 1 to 194 (MSKDTTTYQG…TYVIEAEGEE (194 aa)) are CPSase. Ser61, Gly245, and Gly247 together coordinate L-glutamine. One can recognise a Glutamine amidotransferase type-1 domain in the interval 195–390 (RHTVVAYDLG…VELMDADAQK (196 aa)). Cys273 (nucleophile) is an active-site residue. 5 residues coordinate L-glutamine: Phe274, Gln277, Asn315, Gly317, and Phe318. Catalysis depends on residues His363 and Glu365.

This sequence belongs to the CarA family. As to quaternary structure, composed of two chains; the small (or glutamine) chain promotes the hydrolysis of glutamine to ammonia, which is used by the large (or ammonia) chain to synthesize carbamoyl phosphate. Tetramer of heterodimers (alpha,beta)4.

It catalyses the reaction hydrogencarbonate + L-glutamine + 2 ATP + H2O = carbamoyl phosphate + L-glutamate + 2 ADP + phosphate + 2 H(+). It carries out the reaction L-glutamine + H2O = L-glutamate + NH4(+). It participates in amino-acid biosynthesis; L-arginine biosynthesis; carbamoyl phosphate from bicarbonate: step 1/1. The protein operates within pyrimidine metabolism; UMP biosynthesis via de novo pathway; (S)-dihydroorotate from bicarbonate: step 1/3. Functionally, small subunit of the glutamine-dependent carbamoyl phosphate synthetase (CPSase). CPSase catalyzes the formation of carbamoyl phosphate from the ammonia moiety of glutamine, carbonate, and phosphate donated by ATP, constituting the first step of 2 biosynthetic pathways, one leading to arginine and/or urea and the other to pyrimidine nucleotides. The small subunit (glutamine amidotransferase) binds and cleaves glutamine to supply the large subunit with the substrate ammonia. This is Carbamoyl phosphate synthase small chain from Corynebacterium glutamicum (strain ATCC 13032 / DSM 20300 / JCM 1318 / BCRC 11384 / CCUG 27702 / LMG 3730 / NBRC 12168 / NCIMB 10025 / NRRL B-2784 / 534).